The following is a 622-amino-acid chain: Peptidoglycan O-acetyltransferase OatA (622 aa).

The next 11 helical transmembrane spans lie at 11-31 (YVPS…AYHL), 39-59 (GFIG…NILL), 81-101 (LIPA…FFHP), 143-163 (LWSL…LLVF), 173-193 (LLKI…ILYV), 212-232 (LLSG…PVVP), 237-257 (AVLN…TAFV), 267-287 (GGLL…SHPA), 307-327 (YGIY…LEIT), 334-354 (AILQ…FIET), and 387-407 (IAGV…VLSV). Residues 412–467 (EKQQTSVKTTTSTPDEKKDDKKEDKATKDKEADSNKASEQKETQKPDNKNKSAATP) form a disordered region. A compositionally biased stretch (low complexity) spans 413–424 (KQQTSVKTTTST). Residues 425–461 (PDEKKDDKKEDKATKDKEADSNKASEQKETQKPDNKN) show a composition bias toward basic and acidic residues. Catalysis depends on residues serine 480, aspartate 600, and histidine 603.

It belongs to the acyltransferase 3 family.

The protein localises to the cell membrane. The protein resides in the secreted. Its subcellular location is the cell wall. Functionally, responsible for O-acetylation at the C6-hydroxyl group of N-acetylmuramyl residues, forming the corresponding N,6-O-diacetylmuramic acid of the peptidoglycan. O-acetylation of the peptidoglycan is the major determinant for lysozyme resistance. Critical for virulence and escape from innate immune response of the host. Involved at both early and later stages of listeriosis in the mouse model of infection. Required for successful host colonization and for intracellular survival of bacteria in macrophages of the infected host. Controls the production of inflammatory mediators in the liver of the infected host. Confers resistance to host antimicrobial molecules and to cell wall-targeting molecules such as beta-lactam antibiotics and bacteriocins. The chain is Peptidoglycan O-acetyltransferase OatA from Listeria monocytogenes serovar 1/2a (strain ATCC BAA-679 / EGD-e).